A 464-amino-acid chain; its full sequence is MDLKGKRVSVIGAGKSGIAAAQLLARKGATVFVSELGTMGAEEMQHLREMQIPFEEAGHSPAVYEADFCVISPGIPPHAEVVTTLQARNIPLYSEIELASRFCKARIVGITGTDGKTTTSTLVHALCEEDGLRNGYRAYSVGNIGVPFSSMVLDMKAGDIAVVELSSYQLERSPTLKPEVAVIMNITPDHLDRYAGELQGYAAAKFRIYANQGAGDTLIYNEDDALLREHFACRDQFPFNIMSFGMEPACKGVPDIRTFFLEGDTLVAHTPDGDEPVLVTSDFLKKSFRGRHNISNVLAAVAVAGALGIQREVVCQVIREFRGVEHRQEFVMTINGVDWVNDSKATNMNALRQALEALPATAVLIAGGRDKGNDYAAITRLVEKKVSLLIALGESQDKIVSAFKDVVAVKAAGSLEDAVLLARDAASSGQTVLFSPGCASFDMFKNFEDRGMQFKQCVHQLSSW.

112-118 (GTDGKTT) serves as a coordination point for ATP.

Belongs to the MurCDEF family.

The protein resides in the cytoplasm. The catalysed reaction is UDP-N-acetyl-alpha-D-muramoyl-L-alanine + D-glutamate + ATP = UDP-N-acetyl-alpha-D-muramoyl-L-alanyl-D-glutamate + ADP + phosphate + H(+). The protein operates within cell wall biogenesis; peptidoglycan biosynthesis. Functionally, cell wall formation. Catalyzes the addition of glutamate to the nucleotide precursor UDP-N-acetylmuramoyl-L-alanine (UMA). The sequence is that of UDP-N-acetylmuramoylalanine--D-glutamate ligase from Pelodictyon phaeoclathratiforme (strain DSM 5477 / BU-1).